Reading from the N-terminus, the 381-residue chain is E3 ubiquitin-protein ligase Fancl (381 aa).

The segment at 110-293 (NIYYDILALY…MFDLCYFPMP (184 aa)) is UBC-RWD region (URD). The segment at 303 to 374 (EEDNEELRCN…PFCKAKLSTS (72 aa)) adopts an RING-CH-type; degenerate zinc-finger fold. Zn(2+) is bound by residues cysteine 311, cysteine 314, cysteine 329, cysteine 334, histidine 339, cysteine 342, cysteine 364, and cysteine 367.

As to quaternary structure, interacts (via C-terminus) with FANCI and Fancd2.

The protein localises to the nucleus. The enzyme catalyses S-ubiquitinyl-[E2 ubiquitin-conjugating enzyme]-L-cysteine + [acceptor protein]-L-lysine = [E2 ubiquitin-conjugating enzyme]-L-cysteine + N(6)-ubiquitinyl-[acceptor protein]-L-lysine.. The protein operates within protein modification; protein ubiquitination. Ubiquitin ligase protein that mediates monoubiquitination of Fancd2. Ubiquitination of Fancd2 is stimulated by ionising radiation. Together with Fancd2, and probably FANCI, involved in DNA repair of damage caused by agents that induce interstrand cross-links but not agents that cause double strand breaks. This chain is E3 ubiquitin-protein ligase Fancl, found in Drosophila melanogaster (Fruit fly).